A 115-amino-acid chain; its full sequence is Protamine-2 (115 aa).

The segment at 1 to 115 (MVRCHVKSPT…RRRRRCGRQL (115 aa)) is disordered. S8 carries the post-translational modification Phosphoserine. Over residues 24–38 (ETEHPDQARELRPED) the composition is skewed to basic and acidic residues. 2 stretches are compositionally biased toward basic residues: residues 44-79 (RTHRGRYHYRHRSHTRRRPYRRRRRRACRHRRRRRG) and 102-115 (RRMRRRRRRCGRQL).

The protein belongs to the protamine P2 family. In terms of assembly, interacts with TDRP. Post-translationally, proteolytic processing into mature chains is required for histone eviction during spermatogenesis. Transition proteins (TNP1 and TNP2) are required for processing. In terms of tissue distribution, testis.

It localises to the nucleus. It is found in the chromosome. Its function is as follows. Protamines substitute for histones in the chromatin of sperm during the haploid phase of spermatogenesis. They compact sperm DNA into a highly condensed, stable and inactive complex. In Bos taurus (Bovine), this protein is Protamine-2 (PRM2).